Here is a 338-residue protein sequence, read N- to C-terminus: Fructose-1,6-bisphosphatase class 1 (338 aa).

4 residues coordinate Mg(2+): glutamate 92, aspartate 115, leucine 117, and aspartate 118. Substrate is bound by residues 118–121 (DGSS), asparagine 211, tyrosine 244, and lysine 274. Glutamate 280 serves as a coordination point for Mg(2+).

The protein belongs to the FBPase class 1 family. In terms of assembly, homotetramer. The cofactor is Mg(2+).

The protein localises to the cytoplasm. The enzyme catalyses beta-D-fructose 1,6-bisphosphate + H2O = beta-D-fructose 6-phosphate + phosphate. It functions in the pathway carbohydrate biosynthesis; gluconeogenesis. In Photobacterium profundum (strain SS9), this protein is Fructose-1,6-bisphosphatase class 1.